Here is a 321-residue protein sequence, read N- to C-terminus: G-protein coupled receptor aex-2 (321 aa).

At M1–A24 the chain is on the extracellular side. N-linked (GlcNAc...) asparagine glycans are attached at residues N2, N9, and N17. Residues F25–L45 form a helical membrane-spanning segment. Over T46–R55 the chain is Cytoplasmic. A helical membrane pass occupies residues Q56–T76. Residues R77–P90 are Extracellular-facing. C88 and C161 form a disulfide bridge. Residues Y91–V111 traverse the membrane as a helical segment. Residues D112–L132 are Cytoplasmic-facing. The chain crosses the membrane as a helical span at residues L133–F153. Residues L154–P175 are Extracellular-facing. A helical transmembrane segment spans residues I176–A196. Residues H197–T221 lie on the Cytoplasmic side of the membrane. Residues L222–G242 traverse the membrane as a helical segment. Residues E243 to A254 lie on the Extracellular side of the membrane. A helical membrane pass occupies residues T255–W275. Residues T276–M321 are Cytoplasmic-facing.

It belongs to the G-protein coupled receptor 1 family. As to expression, expressed in the intestinal muscle, anal depressor, AVL and DVB GABAergic neurons, enteric muscles, the nerve ring, the ventral nerve cord and head mesodermal cells.

Its subcellular location is the cell membrane. The protein resides in the cell projection. It is found in the cilium. In terms of biological role, G-protein coupled receptor for the nlp-40 neuropeptide. The activity of this receptor is mediated by G proteins which activate adenylyl cyclase. Plays a role in the defecation motor program, which is a coordinated series of three muscle contractions that occurs every 45 seconds. Specifically, acts in GABAergic neurons, such as AVL and DVB, to control the expulsion step of defecation. Required for fatty acid uptake and metabolism by intestinal cells and therefore regulates the levels of triglycerides in the intestine. This chain is G-protein coupled receptor aex-2, found in Caenorhabditis elegans.